We begin with the raw amino-acid sequence, 54 residues long: Apelin receptor early endogenous ligand (54 aa).

A signal peptide spans 1 to 23 (MRFQPLFWVFFIFAMSLLFISEQ).

Belongs to the Elabela/Toddler family. As to quaternary structure, interacts with APLNR. Expressed in the placenta. Expressed in syncytiotrophoblasts of the placenta labyrinth at 10.5 dpc. Expressed in placental chorionic trophoblasts (at protein level). Expressed in a small population of epiblast cells in the distal half of the embryo at 7 dpc. Expressed in newly formed definitive endoderm cells in the proximal half of the embryo, while it is not present in extra-embryonic endoderm at 7.5 dpc. This expression pattern then changes to the ventral aspect of the developing foregut pocket and the entire hindgut pocket at 8.5 dpc, before becoming restricted to the foregut overlying the heart and the posterior-most hindgut. Not detected in endothelial precursor cells of the yolk sac at 8 dpc. Expressed in extraembryonic tissues as well as in the chorion at 8.25 dpc. Expressed in endometrial stroma of the uterus of pregnant mice at 8.5 dpc. Expressed in the developing heart, caudal neural tube and trophobasts at 9 dpc. Expressed in the chorionic plate of the chorioallantoic placenta at 9 dpc. Expressed in the posterior half of the ventral neural tube at 9.25 dpc. Expressed in trophoblast cells at the periphery of the placenta at 9.5 dpc. Expressed in collecting ducts of the kidney of pregnant mice at 10.5 dpc. Expressed in the epicardium of the developing heart at 11.5 dpc. Expressed weakly in the adult heart. Expressed in endothelial cells and fibroblasts and weakly in cardiomyocytes.

It is found in the secreted. The protein resides in the extracellular space. Functionally, peptide hormone that functions as endogenous ligand for the G-protein-coupled apelin receptor (APLNR/APJ), that plays a role in the regulation of normal cardiovascular function and fluid homeostasis. Functions as a balanced agonist activating both G(i) protein pathway and beta-arrestin pathway of APLNR. Downstream G proteins activation, apelin can inhibit cAMP production and activate key intracellular effectors such as ERKs. On the other hand, APLNR activation induces beta-arrestin recruitment to the membrane leading to desensitization and internalization of the receptor. Required for mesendodermal differentiation, blood vessels formation and heart morphogenesis during early development and for adult cardiovascular homeostasis. Acts as a motogen by promoting mesendodermal cell migration during gastrulation by binding and activating APLNR. Acts as an early embryonic regulator of cellular movement with a role in migration and development of cardiac progenitor cells. May act as a chemoattractant for the activation of angioblast migration toward the embryonic midline, i.e. the position of the future vessel formation, during vasculogenesis. Positively regulates sinus venosus (SV)-derived endothelial cells migration into the developing heart to promote coronary blood vessel sprouting. Plays a role in placental vascular development; promotes placental trophoblast invasion and spiral artery remodeling in the uterus. Involved in the regulation of maternal cardiovascular homeostasis to prevent gestational hypertension and for potent cardioprotective functions during heart failure. Mediates myocardial contractility in an ERK1/2-dependent manner. This Mus musculus (Mouse) protein is Apelin receptor early endogenous ligand.